The following is a 145-amino-acid chain: Selenoprotein M (145 aa).

Residues 1–23 form the signal peptide; it reads MSLLLPPLALLLLLAALVAPATA. Residues Cys-45 and Sec-48 each act as nucleophile in the active site. Positions 45–48 form a cross-link, cysteinyl-selenocysteine (Cys-Sec); the sequence is CGGU. Sec-48 is a non-standard amino acid (selenocysteine).

The protein belongs to the selenoprotein M/F family. As to expression, widely expressed.

It localises to the cytoplasm. Its subcellular location is the perinuclear region. It is found in the endoplasmic reticulum. The protein resides in the golgi apparatus. May function as a thiol-disulfide oxidoreductase that participates in disulfide bond formation. This is Selenoprotein M from Homo sapiens (Human).